A 434-amino-acid polypeptide reads, in one-letter code: UDP-N-acetylglucosamine 1-carboxyvinyltransferase (434 aa).

Residue 22–23 (KN) participates in phosphoenolpyruvate binding. A UDP-N-acetyl-alpha-D-glucosamine-binding site is contributed by R97. Catalysis depends on D121, which acts as the Proton donor. Positions 319 and 341 each coordinate UDP-N-acetyl-alpha-D-glucosamine.

It belongs to the EPSP synthase family. MurA subfamily.

The protein localises to the cytoplasm. The catalysed reaction is phosphoenolpyruvate + UDP-N-acetyl-alpha-D-glucosamine = UDP-N-acetyl-3-O-(1-carboxyvinyl)-alpha-D-glucosamine + phosphate. It functions in the pathway cell wall biogenesis; peptidoglycan biosynthesis. Its function is as follows. Cell wall formation. Adds enolpyruvyl to UDP-N-acetylglucosamine. The sequence is that of UDP-N-acetylglucosamine 1-carboxyvinyltransferase from Porphyromonas gingivalis (strain ATCC BAA-308 / W83).